We begin with the raw amino-acid sequence, 570 residues long: Putative ABC transporter ATP-binding protein MW2603 (570 aa).

ABC transporter domains lie at 6-247 (ISFK…GIRE) and 304-537 (LELN…ASLR). ATP contacts are provided by residues 40-47 (GASGSGKS) and 338-345 (GHNGAGKS).

Belongs to the ABC transporter superfamily.

It localises to the cell membrane. Its function is as follows. Probably part of an ABC transporter complex. Responsible for energy coupling to the transport system. This chain is Putative ABC transporter ATP-binding protein MW2603, found in Staphylococcus aureus (strain MW2).